The sequence spans 385 residues: Chaperone protein DnaJ (385 aa).

Residues 5-70 (DYYEVLGVSK…ERKAAYDRYG (66 aa)) enclose the J domain. Residues 143–221 (GLHKTINVPT…CNGHGRVEKD (79 aa)) form a CR-type zinc finger. The Zn(2+) site is built by C156, C159, C173, C176, C195, C198, C209, and C212. 4 CXXCXGXG motif repeats span residues 156-163 (CTSCEGTG), 173-180 (CPTCSGMG), 195-202 (CPTCSGLG), and 209-216 (CKTCNGHG).

Belongs to the DnaJ family. Homodimer. It depends on Zn(2+) as a cofactor.

The protein resides in the cytoplasm. Participates actively in the response to hyperosmotic and heat shock by preventing the aggregation of stress-denatured proteins and by disaggregating proteins, also in an autonomous, DnaK-independent fashion. Unfolded proteins bind initially to DnaJ; upon interaction with the DnaJ-bound protein, DnaK hydrolyzes its bound ATP, resulting in the formation of a stable complex. GrpE releases ADP from DnaK; ATP binding to DnaK triggers the release of the substrate protein, thus completing the reaction cycle. Several rounds of ATP-dependent interactions between DnaJ, DnaK and GrpE are required for fully efficient folding. Also involved, together with DnaK and GrpE, in the DNA replication of plasmids through activation of initiation proteins. In Ruegeria sp. (strain TM1040) (Silicibacter sp.), this protein is Chaperone protein DnaJ.